A 493-amino-acid polypeptide reads, in one-letter code: Glutamate synthase [NADPH] small chain (493 aa).

An NADP(+)-binding site is contributed by 299 to 313 (GGGDTGADCVATALR).

This sequence belongs to the glutamate synthase family. In terms of assembly, aggregate of 4 catalytic active heterodimers, consisting of a large and a small subunit.

The catalysed reaction is 2 L-glutamate + NADP(+) = L-glutamine + 2-oxoglutarate + NADPH + H(+). Its pathway is amino-acid biosynthesis; L-glutamate biosynthesis via GLT pathway; L-glutamate from 2-oxoglutarate and L-glutamine (NADP(+) route): step 1/1. It participates in energy metabolism; nitrogen metabolism. In Bacillus subtilis (strain 168), this protein is Glutamate synthase [NADPH] small chain (gltB).